The sequence spans 548 residues: Fumarate hydratase class I, anaerobic (548 aa).

[4Fe-4S] cluster is bound at residue C105. K192 is subject to N6-acetyllysine. [4Fe-4S] cluster contacts are provided by C224 and C318.

This sequence belongs to the class-I fumarase family. Homodimer. It depends on [4Fe-4S] cluster as a cofactor.

The catalysed reaction is (S)-malate = fumarate + H2O. It carries out the reaction (S,S)-tartrate = oxaloacetate + H2O. In terms of biological role, catalyzes the reversible hydration of fumarate to (S)-malate. Functions in the generation of fumarate for use as an anaerobic electron acceptor. To a lesser extent, also displays D-tartrate dehydratase activity, but is not able to convert (R)-malate, L-tartrate or meso-tartrate. Is required for anaerobic growth on D-tartrate. In Escherichia coli (strain K12), this protein is Fumarate hydratase class I, anaerobic.